The sequence spans 114 residues: Large ribosomal subunit protein uL22 (114 aa).

This sequence belongs to the universal ribosomal protein uL22 family. Part of the 50S ribosomal subunit.

Functionally, this protein binds specifically to 23S rRNA; its binding is stimulated by other ribosomal proteins, e.g. L4, L17, and L20. It is important during the early stages of 50S assembly. It makes multiple contacts with different domains of the 23S rRNA in the assembled 50S subunit and ribosome. Its function is as follows. The globular domain of the protein is located near the polypeptide exit tunnel on the outside of the subunit, while an extended beta-hairpin is found that lines the wall of the exit tunnel in the center of the 70S ribosome. The chain is Large ribosomal subunit protein uL22 from Bacillus licheniformis (strain ATCC 14580 / DSM 13 / JCM 2505 / CCUG 7422 / NBRC 12200 / NCIMB 9375 / NCTC 10341 / NRRL NRS-1264 / Gibson 46).